A 99-amino-acid chain; its full sequence is Accessory protein p12I (99 aa).

The helical transmembrane segment at Phe3 to Pro23 threads the bilayer. 2 short sequence motifs (SH3-binding) span residues Arg4–Pro11 and Arg33–Pro38. The chain crosses the membrane as a helical span at residues Ile48–Leu68. 2 short sequence motifs (SH3-binding) span residues Pro70–Arg77 and Lys88–Pro93. Residue Lys88 forms a Glycyl lysine isopeptide (Lys-Gly) (interchain with G-Cter in ubiquitin); in isolate LAF linkage.

This sequence belongs to the HTLV-1 accessory protein p12I family. In terms of assembly, p12I is a homodimer. Interacts with human CANX, CALR, ATP6V0C, IL2RB, IL2RG. Binds to MHC-I heavy chains HLA-A2, HLA-B7 and HLA-Cw4. Post-translationally, ubiquitinated; a fraction of P12I is degraded via the ubiquitin system.

It localises to the host endoplasmic reticulum membrane. The protein resides in the host Golgi apparatus. The protein localises to the host cis-Golgi network membrane. Functionally, p12I is a modulator of T-lymphocyte proliferation and immune function and may contribute to establish a persistent infection. Binds and down-modulates cell surface expression of interleukin-2 receptors IL2RB and IL2RG. Also down-modulates cell surface MHC-I molecules by binding to free immature MHC-I heavy chains in the ER and targeting them to the proteasome for degradation. Binding to IL2RB mediates recruitment of JAK1 and JAK3. As a result of this interaction, p12I increases DNA-binding and transcriptional activity of STAT5. In Homo sapiens (Human), this protein is Accessory protein p12I.